Here is a 108-residue protein sequence, read N- to C-terminus: Small ribosomal subunit protein bS6 (108 aa).

This sequence belongs to the bacterial ribosomal protein bS6 family.

In terms of biological role, binds together with bS18 to 16S ribosomal RNA. This chain is Small ribosomal subunit protein bS6, found in Nostoc sp. (strain PCC 7120 / SAG 25.82 / UTEX 2576).